We begin with the raw amino-acid sequence, 532 residues long: Variant surface glycoprotein ILTAT 1.23 (532 aa).

The signal sequence occupies residues 1 to 23; it reads MFKNINAAVLLLILSTRNDYANA. An N-linked (GlcNAc...) asparagine glycan is attached at asparagine 66. Disordered regions lie at residues 79 to 107 and 408 to 504; these read APKK…RNHA and MQAG…DQDK. N-linked (GlcNAc...) asparagine glycosylation is present at asparagine 419. Basic and acidic residues predominate over residues 427 to 445; that stretch reads CKWEEKDGKDGKCVADDSK. The span at 450–470 shows a compositional bias: low complexity; the sequence is GNAPAGAGDGTAGTTTTPNCA. Composition is skewed to basic and acidic residues over residues 472 to 484 and 494 to 504; these read HTDK…ENKG and KGKEGESDQDK. A glycan (N-linked (GlcNAc...) asparagine) is linked at asparagine 509. The GPI-anchor amidated asparagine moiety is linked to residue asparagine 509. The propeptide at 510–532 is removed in mature form; the sequence is GSFLAKKKFALSVVSAAFTALLF.

The protein resides in the cell membrane. Functionally, VSG forms a coat on the surface of the parasite. The trypanosome evades the immune response of the host by expressing a series of antigenically distinct VSGs from an estimated 1000 VSG genes. The polypeptide is Variant surface glycoprotein ILTAT 1.23 (Trypanosoma brucei brucei).